Consider the following 460-residue polypeptide: A-type ATP synthase subunit B (460 aa).

It belongs to the ATPase alpha/beta chains family. Has multiple subunits, A(3), B(3), C, D, E, F, G, I and K(x); there may be a few other subunits as well.

It localises to the cell membrane. Functionally, component of the A-type ATP synthase that produces ATP from ADP in the presence of a proton gradient across the membrane. The B chain is a regulatory subunit. The polypeptide is A-type ATP synthase subunit B (Methanosarcina mazei (strain ATCC BAA-159 / DSM 3647 / Goe1 / Go1 / JCM 11833 / OCM 88) (Methanosarcina frisia)).